A 302-amino-acid polypeptide reads, in one-letter code: tRNA-cytidine(32) 2-sulfurtransferase (302 aa).

The PP-loop motif motif lies at 45–50 (SGGKDS). [4Fe-4S] cluster-binding residues include Cys120, Cys123, and Cys211.

It belongs to the TtcA family. Homodimer. Mg(2+) serves as cofactor. [4Fe-4S] cluster is required as a cofactor.

The protein localises to the cytoplasm. The enzyme catalyses cytidine(32) in tRNA + S-sulfanyl-L-cysteinyl-[cysteine desulfurase] + AH2 + ATP = 2-thiocytidine(32) in tRNA + L-cysteinyl-[cysteine desulfurase] + A + AMP + diphosphate + H(+). It participates in tRNA modification. Its function is as follows. Catalyzes the ATP-dependent 2-thiolation of cytidine in position 32 of tRNA, to form 2-thiocytidine (s(2)C32). The sulfur atoms are provided by the cysteine/cysteine desulfurase (IscS) system. This Aeromonas hydrophila subsp. hydrophila (strain ATCC 7966 / DSM 30187 / BCRC 13018 / CCUG 14551 / JCM 1027 / KCTC 2358 / NCIMB 9240 / NCTC 8049) protein is tRNA-cytidine(32) 2-sulfurtransferase.